Consider the following 718-residue polypeptide: Polyphosphate kinase (718 aa).

N47 serves as a coordination point for ATP. Mg(2+) is bound by residues R372 and R402. Residue H432 is the Phosphohistidine intermediate of the active site. Residues Y465, R561, and H589 each contribute to the ATP site. Positions 683-718 are disordered; the sequence is KADHGDTTPTSNAHQFIPMMSPKNEPDASDLDREDD. Over residues 709–718 the composition is skewed to acidic residues; that stretch reads DASDLDREDD.

Belongs to the polyphosphate kinase 1 (PPK1) family. Mg(2+) serves as cofactor. In terms of processing, an intermediate of this reaction is the autophosphorylated ppk in which a phosphate is covalently linked to a histidine residue through a N-P bond.

The enzyme catalyses [phosphate](n) + ATP = [phosphate](n+1) + ADP. In terms of biological role, catalyzes the reversible transfer of the terminal phosphate of ATP to form a long-chain polyphosphate (polyP). This Lactiplantibacillus plantarum (strain ATCC BAA-793 / NCIMB 8826 / WCFS1) (Lactobacillus plantarum) protein is Polyphosphate kinase.